The primary structure comprises 329 residues: Glutamyl-tRNA reductase (329 aa).

Residues Thr-51–Arg-54, Ser-99, Glu-104–Gln-106, and Gln-110 each bind substrate. The Nucleophile role is filled by Cys-52. Gly-179 to Ala-184 serves as a coordination point for NADP(+).

The protein belongs to the glutamyl-tRNA reductase family. In terms of assembly, homodimer.

The enzyme catalyses (S)-4-amino-5-oxopentanoate + tRNA(Glu) + NADP(+) = L-glutamyl-tRNA(Glu) + NADPH + H(+). It participates in porphyrin-containing compound metabolism; protoporphyrin-IX biosynthesis; 5-aminolevulinate from L-glutamyl-tRNA(Glu): step 1/2. In terms of biological role, catalyzes the NADPH-dependent reduction of glutamyl-tRNA(Glu) to glutamate 1-semialdehyde (GSA). This is Glutamyl-tRNA reductase from Fusobacterium nucleatum subsp. nucleatum (strain ATCC 25586 / DSM 15643 / BCRC 10681 / CIP 101130 / JCM 8532 / KCTC 2640 / LMG 13131 / VPI 4355).